Here is a 353-residue protein sequence, read N- to C-terminus: Cruciform cutting endonuclease 1, mitochondrial (353 aa).

Residues D293 and D294 each coordinate Mg(2+).

As to quaternary structure, homodimer. Requires Mg(2+) as cofactor.

It is found in the mitochondrion. It catalyses the reaction Endonucleolytic cleavage at a junction such as a reciprocal single-stranded crossover between two homologous DNA duplexes (Holliday junction).. Functionally, capable of resolving Holliday junctions. Specific for 4-way junctions. Seems to be important for the maintenance of mitochondrial DNA. Cleaves fixed junctions at the point of strand exchange. Cleaves after 5'-CT-3' sequence. The polypeptide is Cruciform cutting endonuclease 1, mitochondrial (CCE1) (Saccharomyces cerevisiae (strain ATCC 204508 / S288c) (Baker's yeast)).